Reading from the N-terminus, the 2442-residue chain is Histone lysine acetyltransferase CREBBP (2442 aa).

Disordered stretches follow at residues 1–40 (MAEN…ENDL) and 74–168 (RGGS…PATS). At Ala2 the chain carries N-acetylalanine. Over residues 20 to 30 (PGFSANDSTDF) the composition is skewed to polar residues. Residue Ser120 is modified to Phosphoserine. Residues 125-168 (GDSSTPSLPKQAASTSGPTPPASQALNPQAQKQVGLVTSSPATS) show a composition bias toward polar residues. Position 219 is an omega-N-methylarginine (Arg219). Positions 226 to 409 (PAPAMQGATS…GKACQVAHCA (184 aa)) are interaction with SRCAP. Over residues 261–272 (GGMTKMGMTGNT) the composition is skewed to low complexity. The disordered stretch occupies residues 261–290 (GGMTKMGMTGNTSPFGQPFSQTGGQPMGAT). The span at 273-284 (SPFGQPFSQTGG) shows a compositional bias: polar residues. The TAZ-type 1 zinc-finger motif lies at 346 to 432 (DPEKRKLIQQ…RHDCPVCLPL (87 aa)). His362, Cys366, Cys379, Cys384, His393, Cys397, Cys403, Cys408, His417, Cys421, Cys426, and Cys429 together coordinate Zn(2+). The KIX domain occupies 586–665 (GVRKGWHEHV…KIYKIQKELE (80 aa)). Asymmetric dimethylarginine occurs at positions 600 and 624. Lys656 is modified (N6-acetyllysine). Residues 792–825 (FLPQNQFPSSSGAMSVNSVGMGQPATQAGVSQGQ) are compositionally biased toward polar residues. The interval 792–1084 (FLPQNQFPSS…STSPSQPRKK (293 aa)) is disordered. Pro residues-rich tracts occupy residues 846-862 (PCPP…PPPA) and 874-887 (PTPP…PAAP). Residues 894–906 (VSSGQTPTPTPGS) show a composition bias toward polar residues. Low complexity-rich tracts occupy residues 909–930 (SAAQ…VTPQ) and 938–957 (PSVA…HTQP). Residues 974–989 (PTPSSVTSAETSSQQP) are compositionally biased toward polar residues. A Glycyl lysine isopeptide (Lys-Gly) (interchain with G-Cter in SUMO1) cross-link involves residue Lys999. A compositionally biased stretch (basic and acidic residues) spans 1012-1022 (AESKGEPRSEM). Residue Lys1015 is modified to N6-acetyllysine. Ser1031 is modified (phosphoserine). Residues 1033 to 1060 (VKEETDTTEQKSEPMEVEEKKPEVKVEA) are compositionally biased toward basic and acidic residues. Glycyl lysine isopeptide (Lys-Gly) (interchain with G-Cter in SUMO1) cross-links involve residues Lys1034 and Lys1057. The span at 1067–1080 (SANGTASQSTSPSQ) shows a compositional bias: polar residues. The residue at position 1077 (Ser1077) is a Phosphoserine. Residues 1086 to 1193 (FKPEELRQAL…EVFEQEIDPV (108 aa)) form the Bromo domain. Positions 1125 to 1171 (DYFDIVKNPMDLSTIKRKLDTGQYQEPWQYVDDVWLMFNNAWLYNRK) are interaction with histone. The segment at 1163-1181 (NNAWLYNRKTSRVYKFCSK) is interaction with ASF1A. N6-acetyllysine is present on Lys1217. The 378-residue stretch at 1324-1701 (KFSAKRLQTT…MLVELHTQGQ (378 aa)) folds into the CBP/p300-type HAT domain. Residues Ser1383 and Ser1387 each carry the phosphoserine; by IKKA modification. Residues 1434-1436 (YLD) form an interaction with histone region. Residues 1435-1437 (LDS), 1447-1448 (RT), Ile1494, Arg1499, and Trp1503 contribute to the acetyl-CoA site. A coiled-coil region spans residues 1548 to 1575 (NVLEESIKELEQEEEERKKEESTAASET). A compositionally biased stretch (basic and acidic residues) spans 1557–1569 (LEQEEEERKKEES). Residues 1557-1616 (LEQEEEERKKEESTAASETPEGSQGDSKNAKKKNNKKTNKNKSSISRANKKKPSMPNVSN) form a disordered region. Lys1584, Lys1592, Lys1593, Lys1596, and Lys1598 each carry N6-acetyllysine. Residues 1586–1596 (AKKKNNKKTNK) show a composition bias toward basic residues. The ZZ-type zinc finger occupies 1703–1751 (RFVYTCNECKHHVETRWHCTVCEDYDLCINCYNTKSHTHKMVKWGLGLD). Zn(2+) is bound by residues Cys1708, Cys1711, Cys1721, Cys1724, Cys1730, Cys1733, His1739, and His1741. 2 positions are modified to N6-acetyllysine: Lys1742 and Lys1745. Residue Ser1764 is modified to Phosphoserine. The TAZ-type 2 zinc finger occupies 1766 to 1847 (QESRRLSIQR…KCPVPFCLNI (82 aa)). Residues 1875–1960 (TRNVPQQSLP…QPPPAAVEAA (86 aa)) are disordered. Pro residues-rich tracts occupy residues 1901-1913 (PQTP…PQPS) and 1944-1955 (PAPPPPAQPPPA). Ser2064, Ser2077, and Ser2080 each carry phosphoserine. The interval 2112 to 2421 (NQPGMQPQPG…LNTPNRSALS (310 aa)) is disordered. Composition is skewed to low complexity over residues 2113–2138 (QPGM…HQQP), 2197–2217 (QLLQ…QQQQ), 2261–2280 (MGQM…PGLG), and 2287–2305 (IQQA…KQQI). Composition is skewed to polar residues over residues 2315–2327 (SPQQ…QPQA) and 2334–2343 (QIATSLSNQV). The span at 2349-2372 (VQSPRPQSQPPHSSPSPRIQPQPS) shows a compositional bias: pro residues. Position 2351 is a phosphoserine (Ser2351). The span at 2411–2421 (QLNTPNRSALS) shows a compositional bias: polar residues.

As to quaternary structure, part of a complex composed of MSX3, CREBBP/CBP AND EP300/p300; the interaction with MSX3 decreases histone acetylation activity. Found in a complex containing NCOA2; NCOA3; IKKA; IKKB and IKBKG. Probably part of a complex with HIF1A and EP300. Interacts with phosphorylated CREB1. Interacts with the C-terminal region of CITED4. The TAZ-type 1 domain interacts with HIF1A. Interacts with SRCAP, CARM1, ELF3, MLLT7/FOXO4, N4BP2, NCOA1, NCOA3, NCOA6, PCAF, DDX5, DDX17, PELP1, PML, SMAD1, SMAD2, SMAD3, SPIB, TRERF1 and ZCCHC12. Interacts with KLF1; the interaction results in acetylation and enhancement of transcriptional activity of KLF1. Interacts with DAXX; the interaction is dependent on CBP sumoylation and results in suppression of the transcriptional activity via recruitment of HDAC2 to DAXX. Interacts with MAF. Interacts with MTDH. Interacts with MAFG; the interaction acetylates MAFG in the basic region and stimulates NFE2 transcriptional activity through increasing its DNA-binding activity. Interacts with IRF2; the interaction acetylates IRF2 and regulates its activity on the H4 promoter. Interacts (via N-terminus) with SS18L1/CREST (via C-terminus). Interacts with IRF3 (when phosphorylated); forming the dsRNA-activated factor 1 (DRAF1), a complex which activates the transcription of the type I interferon genes. Interacts with MECOM. Interacts with CITED1 (via C-terminus) Interacts with GATA1; the interaction results in acetylation and enhancement of transcriptional activity of GATA1. Interacts with FOXO1; the interaction acetylates FOXO1 and inhibits its transcriptional activity. Interacts with NPAS2, CLOCK and BMAL1. Interacts with ASF1A and ASF1B; this promotes histone acetylation. Interacts with acetylated TP53/p53 and with the acetylated histones H3 and H4. Interacts (via transactivation domain and C-terminus) with PCNA; the interaction occurs on chromatin in UV-irradiated damaged cells. Interacts with DHX9 (via N-terminus); this interaction mediates association with RNA polymerase II holoenzyme and stimulates CREB-dependent transcriptional activation. Interacts with SMAD4; negatively regulated by ZBTB7A. Forms a complex with KMT2A and CREB1. Interacts with DDX3X; this interaction may facilitate HNF4A acetylation. Interacts with MSX1; the interaction may inhibit MSX1 autoinactivation. Interacts with MSX3. Interacts with ACSS2. Post-translationally, methylation of the KIX domain by CARM1 blocks association with CREB. This results in the blockade of CREB signaling, and in activation of apoptotic response. In terms of processing, phosphorylated by CHUK/IKKA at Ser-1383 and Ser-1387; these phosphorylations promote cell growth by switching the binding preference of CREBBP from TP53 to NF-kappa-B. Sumoylation negatively regulates transcriptional activity via the recruitment of DAAX. Post-translationally, autoacetylation is required for binding to protein substrates, such as acetylated histones and acetylated TP53/p53. Autoacetylation is induced by glucose and fatty acids. As to expression, expressed in hypothalamus and cortex.

It localises to the cytoplasm. Its subcellular location is the nucleus. It carries out the reaction L-lysyl-[histone] + acetyl-CoA = N(6)-acetyl-L-lysyl-[histone] + CoA + H(+). It catalyses the reaction L-lysyl-[protein] + acetyl-CoA = N(6)-acetyl-L-lysyl-[protein] + CoA + H(+). The enzyme catalyses (S)-lactoyl-CoA + L-lysyl-[protein] = N(6)-[(S)-lactoyl]-L-lysyl-[protein] + CoA + H(+). Functionally, acetylates histones, giving a specific tag for transcriptional activation. Mediates acetylation of histone H3 at 'Lys-18' and 'Lys-27' (H3K18ac and H3K27ac, respectively). Also acetylates non-histone proteins, like DDX21, FBL, IRF2, MAFG, NCOA3, POLR1E/PAF53 and FOXO1. Binds specifically to phosphorylated CREB and enhances its transcriptional activity toward cAMP-responsive genes. Acts as a coactivator of ALX1. Acts as a circadian transcriptional coactivator which enhances the activity of the circadian transcriptional activators: NPAS2-BMAL1 and CLOCK-BMAL1 heterodimers. Acetylates PCNA; acetylation promotes removal of chromatin-bound PCNA and its degradation during nucleotide excision repair (NER). Acetylates POLR1E/PAF53, leading to decreased association of RNA polymerase I with the rDNA promoter region and coding region. Acetylates DDX21, thereby inhibiting DDX21 helicase activity. Acetylates FBL, preventing methylation of 'Gln-105' of histone H2A (H2AQ104me). In addition to protein acetyltransferase, can use different acyl-CoA substrates, such as lactoyl-CoA, and is able to mediate protein lactylation. Catalyzes lactylation of MRE11 in response to DNA damage, thereby promoting DNA double-strand breaks (DSBs) via homologous recombination (HR). Functions as a transcriptional coactivator for SMAD4 in the TGF-beta signaling pathway. The sequence is that of Histone lysine acetyltransferase CREBBP (Crebbp) from Rattus norvegicus (Rat).